The chain runs to 344 residues: 3,4-dihydroxy-2-butanone 4-phosphate synthase (344 aa).

The tract at residues 1–202 (MILKRVTEAL…VSDLISYRLE (202 aa)) is DHBP synthase. Residues 27 to 28 (RE), D32, 139 to 143 (RTGHT), and E163 each bind D-ribulose 5-phosphate. Residue E28 coordinates Mg(2+). H142 is a binding site for Mg(2+). Positions 203-344 (NESLLKMFCQ…GLKLVETISL (142 aa)) are GTP cyclohydrolase II-like.

In the N-terminal section; belongs to the DHBP synthase family. It in the C-terminal section; belongs to the GTP cyclohydrolase II family. Mg(2+) serves as cofactor. Requires Mn(2+) as cofactor.

The enzyme catalyses D-ribulose 5-phosphate = (2S)-2-hydroxy-3-oxobutyl phosphate + formate + H(+). Its pathway is cofactor biosynthesis; riboflavin biosynthesis; 2-hydroxy-3-oxobutyl phosphate from D-ribulose 5-phosphate: step 1/1. Its function is as follows. Catalyzes the conversion of D-ribulose 5-phosphate to formate and 3,4-dihydroxy-2-butanone 4-phosphate. The sequence is that of 3,4-dihydroxy-2-butanone 4-phosphate synthase (ribB) from Helicobacter pylori (strain ATCC 700392 / 26695) (Campylobacter pylori).